Here is a 426-residue protein sequence, read N- to C-terminus: Tachykinins (426 aa).

Positions methionine 1–glutamate 116 are excised as a propeptide. Arginine 127 carries the arginine amide modification. Positions glycine 131 to glutamate 145 are excised as a propeptide. An Arginine amide modification is found at arginine 156. Residues valine 160–tyrosine 167 constitute a propeptide that is removed on maturation. Arginine 178 is subject to Arginine amide. A propeptide spanning residues serine 182–glutamate 235 is cleaved from the precursor. Residue arginine 246 is modified to Arginine amide. Positions serine 250–glutamate 259 are excised as a propeptide. Arginine 270 carries the arginine amide modification. A propeptide spanning residues asparagine 274–aspartate 291 is cleaved from the precursor. The interval glutamine 299–aspartate 329 is disordered. Arginine 302 is subject to Arginine amide. Positions aspartate 306–aspartate 308 are excised as a propeptide. Arginine 319 bears the Arginine amide mark. Residues asparagine 323–glutamate 358 constitute a propeptide that is removed on maturation. Arginine amide is present on residues arginine 369 and arginine 386. The propeptide occupies tryptophan 390–serine 426.

This sequence belongs to the tachykinin family. In terms of tissue distribution, tachykinins (TK) are expressed throughout the nervous system. APMGFQGMR-amide is also expressed in the retrocerebral complex (at protein level).

It is found in the secreted. In terms of biological role, tachykinins are active peptides which excite neurons, evoke behavioral responses, are potent vasodilators and secretagogues, and contract (directly or indirectly) many smooth muscles. The sequence is that of Tachykinins from Camponotus floridanus (Florida carpenter ant).